Reading from the N-terminus, the 407-residue chain is [Pyruvate dehydrogenase (acetyl-transferring)] kinase isozyme 2, mitochondrial (407 aa).

Residues 135–364 (LEYKDTYGDD…DAVIYLKALS (230 aa)) form the Histidine kinase domain. Phosphotyrosine is present on residues tyrosine 215 and tyrosine 216. Residues 251-258 (ELFKNAMR), aspartate 290, 309-310 (ST), and 325-330 (GFGYGL) each bind ATP. The residue at position 376 (lysine 376) is an N6-succinyllysine.

This sequence belongs to the PDK/BCKDK protein kinase family. In terms of assembly, homodimer, and heterodimer with PDK1. Interacts with the pyruvate dehydrogenase complex subunit DLAT, and is part of the multimeric pyruvate dehydrogenase complex that contains multiple copies of pyruvate dehydrogenase (E1), dihydrolipoamide acetyltransferase (DLAT, E2) and lipoamide dehydrogenase (DLD, E3). In terms of tissue distribution, detected in heart (at protein level). Highest level of expression in heart and skeletal muscle and the lowest in spleen and lung. Liver, kidney, brain and testis levels are intermediate.

Its subcellular location is the mitochondrion matrix. The catalysed reaction is L-seryl-[pyruvate dehydrogenase E1 alpha subunit] + ATP = O-phospho-L-seryl-[pyruvate dehydrogenase E1 alpha subunit] + ADP + H(+). Its activity is regulated as follows. Activity increases in response to increased acetyl-CoA and NADH levels and upon binding to the pyruvate dehydrogenase subunit DLAT. Inhibited by ADP and pyruvate; these compounds interfere with DLAT binding and thereby inhibit kinase activity. Inhibited by dichloroacetate. Inhibited by AZD7545; this compound interferes with DLAT binding and thereby inhibits kinase activity. Reactive oxygen species cause the formation of disulfide bonds, and thereby inhibit the enzyme. Functionally, kinase that plays a key role in the regulation of glucose and fatty acid metabolism and homeostasis via phosphorylation of the pyruvate dehydrogenase subunits PDHA1 and PDHA2. This inhibits pyruvate dehydrogenase activity, and thereby regulates metabolite flux through the tricarboxylic acid cycle, down-regulates aerobic respiration and inhibits the formation of acetyl-coenzyme A from pyruvate. Inhibition of pyruvate dehydrogenase decreases glucose utilization and increases fat metabolism. Mediates cellular responses to insulin. Plays an important role in maintaining normal blood glucose levels and in metabolic adaptation to nutrient availability. Via its regulation of pyruvate dehydrogenase activity, plays an important role in maintaining normal blood pH and in preventing the accumulation of ketone bodies under starvation. Plays a role in the regulation of cell proliferation and in resistance to apoptosis under oxidative stress. Plays a role in p53/TP53-mediated apoptosis. The polypeptide is [Pyruvate dehydrogenase (acetyl-transferring)] kinase isozyme 2, mitochondrial (Pdk2) (Rattus norvegicus (Rat)).